The primary structure comprises 60 residues: Large ribosomal subunit protein bL32 (60 aa).

Residues 1–16 (MAVPRRKTSPSRRGMR) are compositionally biased toward basic residues. The interval 1–60 (MAVPRRKTSPSRRGMRRSADAIKKPTYVEDKDSGELRRPHHLDLKTGMYKGRQVLKKKES) is disordered. Residues 17–44 (RSADAIKKPTYVEDKDSGELRRPHHLDL) show a composition bias toward basic and acidic residues.

The protein belongs to the bacterial ribosomal protein bL32 family.

The sequence is that of Large ribosomal subunit protein bL32 from Bradyrhizobium diazoefficiens (strain JCM 10833 / BCRC 13528 / IAM 13628 / NBRC 14792 / USDA 110).